We begin with the raw amino-acid sequence, 248 residues long: PF03932 family protein CutC (248 aa).

Belongs to the CutC family. In terms of assembly, homodimer.

Its subcellular location is the cytoplasm. The protein is PF03932 family protein CutC of Shigella boydii serotype 18 (strain CDC 3083-94 / BS512).